The following is a 39-amino-acid chain: Phospholipase A2 (39 aa).

Trp-10, Gly-12, and Gly-14 together coordinate Ca(2+). The cysteines at positions 11 and 33 are disulfide-linked. Residue His-36 is part of the active site. Asp-37 is a binding site for Ca(2+).

The cofactor is Ca(2+). As to expression, expressed uniformly in tentacles (at protein level).

It is found in the secreted. Its subcellular location is the nematocyst. It catalyses the reaction a 1,2-diacyl-sn-glycero-3-phosphocholine + H2O = a 1-acyl-sn-glycero-3-phosphocholine + a fatty acid + H(+). With respect to regulation, inhibited by morin and p-BPB. In terms of biological role, PA2 catalyzes the calcium-dependent hydrolysis of the 2-acyl groups in 3-sn-phosphoglycerides. Induces insulin secretion in isolated rat islets under high glucose concentration conditions, but not under low glucose concentration conditions. Increases perfusion pressure, renal vascular resistance, urinary flow, glomerular filtration rate, and potassium, sodium, and chloride excretion levels in rat kidney. Does not increase perfusion pressure in the rat mesenteric vascular bed. The polypeptide is Phospholipase A2 (Bunodosoma caissarum (Sea anemone)).